The chain runs to 352 residues: Selenide, water dikinase (352 aa).

Cysteine 23 is a catalytic residue. ATP-binding positions include lysine 26 and 54-56; that span reads SRD. Aspartate 57 lines the Mg(2+) pocket. ATP contacts are provided by residues aspartate 74, aspartate 97, and 145–147; that span reads GHS. Residue aspartate 97 coordinates Mg(2+). Residue aspartate 233 coordinates Mg(2+).

It belongs to the selenophosphate synthase 1 family. Class I subfamily. Homodimer. The cofactor is Mg(2+).

It catalyses the reaction hydrogenselenide + ATP + H2O = selenophosphate + AMP + phosphate + 2 H(+). Synthesizes selenophosphate from selenide and ATP. The polypeptide is Selenide, water dikinase (Shewanella baltica (strain OS185)).